The primary structure comprises 106 residues: Small ribosomal subunit protein uS10 (106 aa).

Belongs to the universal ribosomal protein uS10 family. As to quaternary structure, part of the 30S ribosomal subunit.

Its function is as follows. Involved in the binding of tRNA to the ribosomes. This chain is Small ribosomal subunit protein uS10, found in Hyphomonas neptunium (strain ATCC 15444).